The primary structure comprises 551 residues: Arginine--tRNA ligase (551 aa).

Positions 123–133 (ANPTGPLTIGR) match the 'HIGH' region motif.

This sequence belongs to the class-I aminoacyl-tRNA synthetase family. In terms of assembly, monomer.

The protein resides in the cytoplasm. It carries out the reaction tRNA(Arg) + L-arginine + ATP = L-arginyl-tRNA(Arg) + AMP + diphosphate. This chain is Arginine--tRNA ligase, found in Chlorobaculum tepidum (strain ATCC 49652 / DSM 12025 / NBRC 103806 / TLS) (Chlorobium tepidum).